A 677-amino-acid chain; its full sequence is Methionine--tRNA ligase (677 aa).

Positions proline 15–histidine 25 match the 'HIGH' region motif. Zn(2+)-binding residues include cysteine 146, cysteine 149, cysteine 159, and cysteine 162. The short motif at lysine 333 to serine 337 is the 'KMSKS' region element. Lysine 336 is a binding site for ATP. Positions aspartate 575–lysine 677 constitute a tRNA-binding domain.

Belongs to the class-I aminoacyl-tRNA synthetase family. MetG type 1 subfamily. Homodimer. Zn(2+) serves as cofactor.

It localises to the cytoplasm. It carries out the reaction tRNA(Met) + L-methionine + ATP = L-methionyl-tRNA(Met) + AMP + diphosphate. Its function is as follows. Is required not only for elongation of protein synthesis but also for the initiation of all mRNA translation through initiator tRNA(fMet) aminoacylation. This Escherichia coli O17:K52:H18 (strain UMN026 / ExPEC) protein is Methionine--tRNA ligase.